The sequence spans 451 residues: tRNA modification GTPase MnmE (451 aa).

Positions 37, 95, and 135 each coordinate (6S)-5-formyl-5,6,7,8-tetrahydrofolate. One can recognise a TrmE-type G domain in the interval 232-376; that stretch reads GLSIVIMGPP…LVEAIADFAG (145 aa). N242 is a K(+) binding site. GTP contacts are provided by residues 242–247, 261–267, and 286–289; these read NAGKST, SEIAGTT, and DTAG. S246 lines the Mg(2+) pocket. 3 residues coordinate K(+): S261, I263, and T266. Mg(2+) is bound at residue T267. A (6S)-5-formyl-5,6,7,8-tetrahydrofolate-binding site is contributed by K451.

Belongs to the TRAFAC class TrmE-Era-EngA-EngB-Septin-like GTPase superfamily. TrmE GTPase family. In terms of assembly, homodimer. Heterotetramer of two MnmE and two MnmG subunits. Requires K(+) as cofactor.

It is found in the cytoplasm. Its function is as follows. Exhibits a very high intrinsic GTPase hydrolysis rate. Involved in the addition of a carboxymethylaminomethyl (cmnm) group at the wobble position (U34) of certain tRNAs, forming tRNA-cmnm(5)s(2)U34. The polypeptide is tRNA modification GTPase MnmE (Beijerinckia indica subsp. indica (strain ATCC 9039 / DSM 1715 / NCIMB 8712)).